A 396-amino-acid chain; its full sequence is L-cysteine desulfidase (396 aa).

The Proton acceptor role is filled by C23. Residues C288, C330, and C337 each contribute to the [4Fe-4S] cluster site.

It belongs to the L-cysteine desulfidase family. Homotrimer. The cofactor is [4Fe-4S] cluster.

The enzyme catalyses L-cysteine + H2O = hydrogen sulfide + pyruvate + NH4(+) + H(+). In terms of biological role, catalyzes the cleavage of L-cysteine to form 2-aminoprop-2-enoate and sulfide. The former then spontaneously hydrolyzes to pyruvate and NH(3). May be responsible for the production of sulfide required for the biosynthesis of iron-sulfur centers in this archaea. The polypeptide is L-cysteine desulfidase (Methanococcus maripaludis (strain C6 / ATCC BAA-1332)).